Consider the following 515-residue polypeptide: Bifunctional purine biosynthesis protein PurH (515 aa).

Positions 1–145 (MTKRVLISVS…KNHASVTVVV (145 aa)) constitute an MGS-like domain.

The protein belongs to the PurH family.

The enzyme catalyses (6R)-10-formyltetrahydrofolate + 5-amino-1-(5-phospho-beta-D-ribosyl)imidazole-4-carboxamide = 5-formamido-1-(5-phospho-D-ribosyl)imidazole-4-carboxamide + (6S)-5,6,7,8-tetrahydrofolate. It carries out the reaction IMP + H2O = 5-formamido-1-(5-phospho-D-ribosyl)imidazole-4-carboxamide. Its pathway is purine metabolism; IMP biosynthesis via de novo pathway; 5-formamido-1-(5-phospho-D-ribosyl)imidazole-4-carboxamide from 5-amino-1-(5-phospho-D-ribosyl)imidazole-4-carboxamide (10-formyl THF route): step 1/1. The protein operates within purine metabolism; IMP biosynthesis via de novo pathway; IMP from 5-formamido-1-(5-phospho-D-ribosyl)imidazole-4-carboxamide: step 1/1. The sequence is that of Bifunctional purine biosynthesis protein PurH from Streptococcus pneumoniae serotype 19F (strain G54).